The following is a 134-amino-acid chain: 4-carboxymuconolactone decarboxylase (134 aa).

It belongs to the carboxymuconolactone decarboxylase family.

The enzyme catalyses (R)-2-(carboxymethyl)-5-oxo-2,5-dihydro-2-furoate + H(+) = (4,5-dihydro-5-oxofuran-2-yl)-acetate + CO2. The protein operates within aromatic compound metabolism; beta-ketoadipate pathway; 5-oxo-4,5-dihydro-2-furylacetate from 3-carboxy-cis,cis-muconate: step 2/2. The polypeptide is 4-carboxymuconolactone decarboxylase (pcaC) (Acinetobacter baylyi (strain ATCC 33305 / BD413 / ADP1)).